We begin with the raw amino-acid sequence, 343 residues long: Probable magnesium transporter NIPA4 (343 aa).

Residues 1 to 18 are Extracellular-facing; the sequence is MAESSGSWRDSYKGMSSD. Residues 19–39 traverse the membrane as a helical segment; sequence NIKGLVLALSSSLFIGASFIV. At 40 to 66 the chain is on the cytoplasmic side; that stretch reads KKKGLKKAASTGTRAGVGGYSYLYEPL. The chain crosses the membrane as a helical span at residues 67–87; sequence WWIGMTTMLLGEIANFAAYAF. At 88 to 90 the chain is on the extracellular side; sequence APA. A helical membrane pass occupies residues 91 to 111; it reads ILVTPLGAVSIIISAVLAHII. The Cytoplasmic portion of the chain corresponds to 112 to 115; the sequence is LREK. The helical transmembrane segment at 116 to 136 threads the bilayer; the sequence is LHIFGILGCALCVVGSTTIVL. At 137 to 157 the chain is on the extracellular side; that stretch reads HAPQEREIDSVIEVWNLATEP. The helical transmembrane segment at 158–178 threads the bilayer; it reads AFMFYASLVIGAAVFLIIRFV. Over 179–189 the chain is Cytoplasmic; sequence PQYGQTNVMVY. The chain crosses the membrane as a helical span at residues 190-210; it reads IGICSLVGSLSVMSVKALGIA. The Extracellular segment spans residues 211–220; it reads LKLTFSGTNQ. A helical transmembrane segment spans residues 221-241; it reads LFYPQTWIFTLVVLTCVVTQL. The Cytoplasmic portion of the chain corresponds to 242-254; it reads NYLNKALDTFNTA. A helical membrane pass occupies residues 255-275; it reads IVSPIYYVMFTSLTILASVIM. At 276 to 283 the chain is on the extracellular side; the sequence is FKDWDRQN. The chain crosses the membrane as a helical span at residues 284-304; that stretch reads GTQIVTEICGFVTILSGTFLL. The Cytoplasmic segment spans residues 305–343; that stretch reads HRTKDMVEGSSVILPLRISKHINEEEGIPLRRQESLRSP.

It belongs to the NIPA (TC 2.A.7) family. Homodimer.

It localises to the cell membrane. The protein resides in the early endosome. Its function is as follows. Acts as a Mg(2+) transporter. Can also transport other divalent cations such as Fe(2+), Sr(2+), Ba(2+), Mn(2+) and Co(2+) but to a much less extent than Mg(2+). This Arabidopsis thaliana (Mouse-ear cress) protein is Probable magnesium transporter NIPA4.